We begin with the raw amino-acid sequence, 947 residues long: Protein NLP8 (947 aa).

Disordered regions lie at residues 114–135 (RSSA…ELSG), 509–533 (STKK…TTSS), and 550–591 (SMFS…EKNV). The span at 126 to 135 (RSSDSDELSG) shows a compositional bias: basic and acidic residues. Polar residues-rich tracts occupy residues 522–533 (SDMSNFPQTTSS) and 550–572 (SMFS…TLEQ). Residues 573 to 587 (DVSKARTPEKKKSTT) show a composition bias toward basic and acidic residues. The RWP-RK domain maps to 577 to 671 (ARTPEKKKST…LDSVQGVEGG (95 aa)). Residues 646-666 (RKINKVNRSLRKIQTVLDSVQ) are a coiled coil. Residues 805 to 815 (SCSISDSSNGS) show a composition bias toward low complexity. The interval 805-828 (SCSISDSSNGSGAVLRGSSSTSME) is disordered. Residues 847–929 (TLIVKASYRE…HSVKFLVRDL (83 aa)) form the PB1 domain.

It localises to the nucleus. Functionally, probable transcription factor. In Arabidopsis thaliana (Mouse-ear cress), this protein is Protein NLP8 (NLP8).